The primary structure comprises 265 residues: 3-methyl-2-oxobutanoate hydroxymethyltransferase (265 aa).

Mg(2+) contacts are provided by aspartate 45 and aspartate 84. 3-methyl-2-oxobutanoate contacts are provided by residues 45 to 46 (DS), aspartate 84, and lysine 112. Glutamate 114 contributes to the Mg(2+) binding site. Glutamate 181 serves as the catalytic Proton acceptor.

Belongs to the PanB family. In terms of assembly, homodecamer; pentamer of dimers. Mg(2+) serves as cofactor.

It is found in the cytoplasm. It carries out the reaction 3-methyl-2-oxobutanoate + (6R)-5,10-methylene-5,6,7,8-tetrahydrofolate + H2O = 2-dehydropantoate + (6S)-5,6,7,8-tetrahydrofolate. Its pathway is cofactor biosynthesis; (R)-pantothenate biosynthesis; (R)-pantoate from 3-methyl-2-oxobutanoate: step 1/2. Functionally, catalyzes the reversible reaction in which hydroxymethyl group from 5,10-methylenetetrahydrofolate is transferred onto alpha-ketoisovalerate to form ketopantoate. In Yersinia pestis bv. Antiqua (strain Antiqua), this protein is 3-methyl-2-oxobutanoate hydroxymethyltransferase.